Here is a 440-residue protein sequence, read N- to C-terminus: 6-phospho-alpha-glucosidase (440 aa).

4–70 contributes to the NAD(+) binding site; sequence FSIVVAGGGS…PDINFVYTTD (67 aa). Substrate contacts are provided by arginine 93 and asparagine 147. Cysteine 169 is a binding site for Mn(2+). The active-site Proton donor is aspartate 170. Residue histidine 200 participates in Mn(2+) binding. The active-site Proton acceptor is the tyrosine 263. Substrate is bound at residue arginine 283.

The protein belongs to the glycosyl hydrolase 4 family. Homodimer. NAD(+) serves as cofactor. It depends on Mn(2+) as a cofactor.

The protein operates within glycan degradation; palatinose degradation. In terms of biological role, in vitro, readily hydrolyzes p-nitrophenyl-alpha-D-glucopyranoside 6-phosphate (pNPalphaG6P), a chromogenic analog of the phosphorylated isomers of sucrose. In vivo, is probably involved in the degradation of the 6-phosphate derivatives of the sucrose isomers trehalulose, turanose, maltulose and palatinose, catalyzing their hydrolysis into glucose 6-phosphate (G6P) and fructose, which allows the bacterium to use these sugars as energy sources for growth. Is not able to hydrolyze the C2 or C4 chromogenic stereomers (i.e. pNPalpha-mannopyranoside-6P and pNPalpha-galactopyranoside-6P, respectively). In Leptotrichia buccalis (strain ATCC 14201 / DSM 1135 / JCM 12969 / NCTC 10249 / C-1013-b), this protein is 6-phospho-alpha-glucosidase (pagL).